A 381-amino-acid polypeptide reads, in one-letter code: Cytochrome b (381 aa).

The next 4 helical transmembrane spans lie at 34 to 54 (FGSLLGLCLVIQIVTGLFLAM), 78 to 99 (WLIRNIHANGASLFFVCIYFHI), 114 to 134 (WNIGVILLFLLMATAFVGYVL), and 179 to 199 (FFAFHFLLPFLITALMIIHIL). Residues His-84 and His-98 each contribute to the heme b site. His-183 and His-197 together coordinate heme b. Residue His-202 participates in a ubiquinone binding. A run of 4 helical transmembrane segments spans residues 227–247 (YKDALGFLSLLILLGILALFL), 289–309 (LGGVLALLFSILILMLVPFLH), 321–341 (LTQVFFWILVANMLVLTWIGG), and 348–368 (FILIGQIASISYFSLFLIAIP).

The protein belongs to the cytochrome b family. In terms of assembly, the cytochrome bc1 complex contains 3 respiratory subunits (MT-CYB, CYC1 and UQCRFS1), 2 core proteins (UQCRC1 and UQCRC2) and probably 6 low-molecular weight proteins. Heme b serves as cofactor.

It is found in the mitochondrion inner membrane. Its function is as follows. Component of the ubiquinol-cytochrome c reductase complex (complex III or cytochrome b-c1 complex) that is part of the mitochondrial respiratory chain. The b-c1 complex mediates electron transfer from ubiquinol to cytochrome c. Contributes to the generation of a proton gradient across the mitochondrial membrane that is then used for ATP synthesis. The chain is Cytochrome b (mt-cyb) from Carcharodon carcharias (Great white shark).